Consider the following 1456-residue polypeptide: Retrovirus-related Pol polyprotein from transposon RE2 (1456 aa).

The tract at residues 205–252 (NVVTHRNTNTNRNQNNRGDNRNYNNNNNRSNSWQPSSSGSRSDNRQPK) is disordered. Low complexity predominate over residues 210–245 (RNTNTNRNQNNRGDNRNYNNNNNRSNSWQPSSSGSR). The CCHC-type zinc-finger motif lies at 257–273 (RCQICSVQGHSAKRCPQ). A compositionally biased stretch (low complexity) spans 276–291 (QFQSTTNQQQSTSPFT). Positions 276–295 (QFQSTTNQQQSTSPFTPWQP) are disordered. Aspartate 313 (for protease activity) is an active-site residue. The region spanning 498–661 (TSSKPLEYIY…SPFQKLFGQP (164 aa)) is the Integrase catalytic domain. Mg(2+)-binding residues include aspartate 509 and aspartate 571. Polar residues predominate over residues 738-754 (STSQEQRSDSAPNWPSH). Residues 738–896 (STSQEQRSDS…PPLPPVLPAP (159 aa)) are disordered. The span at 793–814 (SSSNLPSSSISSPSSSEPTAPS) shows a compositional bias: low complexity. Positions 816–827 (NGPQPTAQPHQT) are enriched in polar residues. 2 stretches are compositionally biased toward low complexity: residues 828 to 841 (QNSN…NNPN) and 849 to 886 (SPNQ…STST). Pro residues predominate over residues 887-896 (PPLPPVLPAP). A Reverse transcriptase Ty1/copia-type domain is found at 965–1208 (NHTWDLVPPP…LTAKPVATPM (244 aa)).

The enzyme catalyses DNA(n) + a 2'-deoxyribonucleoside 5'-triphosphate = DNA(n+1) + diphosphate. This chain is Retrovirus-related Pol polyprotein from transposon RE2 (RE2), found in Arabidopsis thaliana (Mouse-ear cress).